The chain runs to 244 residues: Ureidoacrylate amidohydrolase RutB (244 aa).

Catalysis depends on Asp38, which acts as the Proton acceptor. The active site involves Lys147. Cys180 (nucleophile) is an active-site residue.

The protein belongs to the isochorismatase family. RutB subfamily.

It carries out the reaction (Z)-3-ureidoacrylate + H2O + H(+) = (Z)-3-aminoacrylate + NH4(+) + CO2. It catalyses the reaction (Z)-3-ureidoacrylate + H2O = (Z)-3-aminoacrylate + carbamate + H(+). The catalysed reaction is (Z)-2-methylureidoacrylate + H2O + H(+) = (Z)-2-methylaminoacrylate + NH4(+) + CO2. Its function is as follows. Hydrolyzes ureidoacrylate to form aminoacrylate and carbamate. The carbamate hydrolyzes spontaneously, thereby releasing one of the nitrogen atoms of the pyrimidine ring as ammonia and one of its carbon atoms as CO2. The polypeptide is Ureidoacrylate amidohydrolase RutB (Escherichia coli O55:H7 (strain CB9615 / EPEC)).